Consider the following 414-residue polypeptide: COUP transcription factor 2 (414 aa).

The disordered stretch occupies residues 1 to 72; the sequence is MAMVVSTWRD…PGGPGSDKQQ (72 aa). A compositionally biased stretch (pro residues) spans 27 to 37; sequence PPVPGPPPGAP. Residues 38–54 are compositionally biased toward low complexity; that stretch reads HTPQTPGQGGPASTPAQ. Phosphothreonine is present on T51. The segment at residues 76–151 is a DNA-binding region (nuclear receptor); sequence HIECVVCGDK…VGMRREAVQR (76 aa). 2 consecutive NR C4-type zinc fingers follow at residues 79–99 and 115–139; these read CVVC…CEGC and CRAN…LKKC. The interaction with ZFPM2 stretch occupies residues 117-414; the sequence is ANRNCPIDQH…SFNWPYMAIQ (298 aa). One can recognise an NR LBD domain in the interval 177–403; the sequence is YLSGYISLLL…TLIRDMLLSG (227 aa). The important for dimerization stretch occupies residues 337 to 414; the sequence is LQEKSQCALE…SFNWPYMAIQ (78 aa).

Belongs to the nuclear hormone receptor family. NR2 subfamily. Interacts with SQSTM1. Binds DNA as a dimer; homodimer or heterodimer with NR2F6. Interacts with NCOA1, NCOA2, NCOA3 and PPARGC1A. Interacts with ZFPM2.

The protein resides in the nucleus. Functionally, ligand-activated transcription factor. Activated by high concentrations of 9-cis-retinoic acid and all-trans-retinoic acid, but not by dexamethasone, cortisol or progesterone (in vitro). Regulation of the apolipoprotein A-I gene transcription. Binds to DNA site A. May be required to establish ovary identity during early gonad development. This chain is COUP transcription factor 2 (Nr2f2), found in Rattus norvegicus (Rat).